The primary structure comprises 435 residues: Casein kinase 1-like protein 12 (435 aa).

Residues 9 to 278 (YRLGRKIGSG…LKRIFRDLFI (270 aa)) form the Protein kinase domain. ATP contacts are provided by residues 15-23 (IGSGSFGEI) and lysine 38. Catalysis depends on aspartate 128, which acts as the Proton acceptor. Disordered regions lie at residues 313–363 (VGTS…RGPM) and 394–414 (LRNS…TRKH).

This sequence belongs to the protein kinase superfamily. CK1 Ser/Thr protein kinase family. Casein kinase I subfamily. Monomer. Autophosphorylated.

The protein resides in the cytoplasm. The catalysed reaction is L-seryl-[protein] + ATP = O-phospho-L-seryl-[protein] + ADP + H(+). It catalyses the reaction L-threonyl-[protein] + ATP = O-phospho-L-threonyl-[protein] + ADP + H(+). Casein kinases are operationally defined by their preferential utilization of acidic proteins such as caseins as substrates. It can phosphorylate a large number of proteins. In Arabidopsis thaliana (Mouse-ear cress), this protein is Casein kinase 1-like protein 12.